The following is a 402-amino-acid chain: Nicotinate phosphoribosyltransferase (402 aa).

At His221 the chain carries Phosphohistidine; by autocatalysis.

It belongs to the NAPRTase family. Transiently phosphorylated on a His residue during the reaction cycle. Phosphorylation strongly increases the affinity for substrates and increases the rate of nicotinate D-ribonucleotide production. Dephosphorylation regenerates the low-affinity form of the enzyme, leading to product release.

The enzyme catalyses nicotinate + 5-phospho-alpha-D-ribose 1-diphosphate + ATP + H2O = nicotinate beta-D-ribonucleotide + ADP + phosphate + diphosphate. It participates in cofactor biosynthesis; NAD(+) biosynthesis; nicotinate D-ribonucleotide from nicotinate: step 1/1. In terms of biological role, catalyzes the synthesis of beta-nicotinate D-ribonucleotide from nicotinate and 5-phospho-D-ribose 1-phosphate at the expense of ATP. This chain is Nicotinate phosphoribosyltransferase, found in Sodalis glossinidius (strain morsitans).